A 508-amino-acid polypeptide reads, in one-letter code: Abl interactor 1 (508 aa).

Alanine 2 bears the N-acetylalanine mark. Positions 18–79 (ALIESYQNLT…NNVLQLLDIQ (62 aa)) are required for binding to WASF1. The region spanning 45-107 (KALEETKAYT…DIHKEKVARR (63 aa)) is the t-SNARE coiled-coil homology domain. Tyrosine 53 carries the phosphotyrosine modification. Disordered stretches follow at residues 159–290 (KHGN…APPL), 306–375 (APGS…LTPQ), and 388–421 (NIAD…PVDY). The span at 161–175 (GNNQPARTGTLSRTN) shows a compositional bias: polar residues. Phosphothreonine is present on residues threonine 174 and threonine 178. Residues serine 183 and serine 187 each carry the phosphoserine modification. Tyrosine 213 is modified (phosphotyrosine; by ABL1). Threonine 215 bears the Phosphothreonine mark. Phosphoserine is present on residues serine 216, serine 222, and serine 225. Polar residues predominate over residues 222–235 (SQHSPGRTASLNQR). Residues 248–258 (SRENSGSSSIG) are compositionally biased toward low complexity. Over residues 278–290 (VPPPSGAPPAPPL) the composition is skewed to pro residues. The span at 307 to 322 (PGSQYGTMTRQISRHN) shows a compositional bias: polar residues. Serine 319 and serine 323 each carry phosphoserine. The span at 337 to 347 (PSVTAQFSAQP) shows a compositional bias: polar residues. 2 stretches are compositionally biased toward pro residues: residues 393-403 (PTPPPPPPPDD) and 410-419 (SPPPPPPPPV). An SH3 domain is found at 446-505 (NYIEKVVAIYDYTKDKDDELSFMEGAIIYVIKKNDDGWYEGVCNRVTGLFPGNYVESIMH). Tyrosine 455 is subject to Phosphotyrosine. Serine 466 bears the Phosphoserine mark. At threonine 507 the chain carries Phosphothreonine.

The protein belongs to the ABI family. Interacts with ABL1, ENAH, STX1A, SNAP25, VAMP2, EPS8, and through its N-terminus with WASF1. Part of a complex consisting of ABI1, STX1A and SNAP25. Part of a complex consisting of ABI1, EPS8 and SOS1. Interacts with SOS1, SOS2, GRB2, SPTA1 and the first SH3 domain of NCK1. Isoform 6 does not interact with NCK1. Component of the WAVE2 complex composed of ABI1, CYFIP1/SRA1, NCKAP1/NAP1 (NCKAP1l/HEM1 in hematopoietic cells) and WASF2/WAVE2. Interacts (via SH3 domain) with SHANK2 and SHANK3, but not SHANK1; the interaction is direct. Interacts with the heterodimer MYC:MAX; the interaction may enhance MYC:MAX transcriptional activity. Interacts with FNBP1L (via the SH3 domain), WASF2, and CDC42, but only in the presence of FNBP1L. As to quaternary structure, (Microbial infection) Interacts with human cytomegalovirus/HHV-5 protein UL135. Post-translationally, phosphorylated on tyrosine residues after serum stimulation or induction by v-Abl. Seems to be phosphorylated at Tyr-53 by ABL1, required for nuclear but not for synaptic localization. In terms of tissue distribution, widely expressed, with highest expression in brain.

The protein localises to the cytoplasm. It is found in the nucleus. Its subcellular location is the cell projection. The protein resides in the lamellipodium. It localises to the filopodium. The protein localises to the growth cone. It is found in the postsynaptic density. Its subcellular location is the cytoskeleton. Its function is as follows. May act in negative regulation of cell growth and transformation by interacting with nonreceptor tyrosine kinases ABL1 and/or ABL2. May play a role in regulation of EGF-induced Erk pathway activation. Involved in cytoskeletal reorganization and EGFR signaling. Together with EPS8 participates in transduction of signals from Ras to Rac. In vitro, a trimeric complex of ABI1, EPS8 and SOS1 exhibits Rac specific guanine nucleotide exchange factor (GEF) activity and ABI1 seems to act as an adapter in the complex. Regulates ABL1/c-Abl-mediated phosphorylation of ENAH. Recruits WASF1 to lamellipodia and there seems to regulate WASF1 protein level. In brain, seems to regulate the dendritic outgrowth and branching as well as to determine the shape and number of synaptic contacts of developing neurons. The chain is Abl interactor 1 from Homo sapiens (Human).